The chain runs to 389 residues: Putative RNA methyltransferase R405 (389 aa).

Gln207, Asp261, and Asp314 together coordinate S-adenosyl-L-methionine. Cys342 serves as the catalytic Nucleophile.

The protein belongs to the class I-like SAM-binding methyltransferase superfamily. RNA M5U methyltransferase family.

The chain is Putative RNA methyltransferase R405 from Acanthamoeba polyphaga (Amoeba).